A 500-amino-acid chain; its full sequence is MSSSPSFGLLAVAALLLALSLAQHGSLAATVGPRVIVVGAGMSGISAAKRLSEAGITDLLILEATDHIGGRMHKTNFAGINVELGANWVEGVNGGKMNPIWPIVNSTLKLRNFRSDFDYLAQNVYKEDGGVYDEDYVQKRIELADSVEEMGEKLSATLHASGRDDMSILAMQRLNEHQPNGPATPVDMVVDYYKFDYEFAEPPRVTSLQNTVPLATFSDFGDDVYFVADQRGYEAVVYYLAGQYLKTDDKSGKIVDPRLQLNKVVREIKYSPGGVTVKTEDNSVYSADYVMVSASLGVLQSDLIQFKPKLPTWKVRAIYQFDMAVYTKIFLKFPRKFWPEGKGREFFLYASSRRGYYGVWQEFEKQYPDANVLLVTVTDEESRRIEQQSDEQTKAEIMQVLRKMFPGKDVPDATDILVPRWWSDRFYKGTFSNWPVGVNRYEYDQLRAPVGRVYFTGEHTSEHYNGYVHGAYLSGIDSAEILINCAQKKMCKYHVQGKYD.

A signal peptide spans 1–28 (MSSSPSFGLLAVAALLLALSLAQHGSLA). Residues 42 to 43 (MS), E63, R71, and 87 to 88 (NW) each bind FAD. Residue E90 participates in substrate binding. The N-linked (GlcNAc...) asparagine glycan is linked to N105. Substrate is bound at residue E198. FAD contacts are provided by V265, Y427, and E458. G466 contacts substrate. 467–468 (YV) contacts FAD. C485 and C491 are disulfide-bonded.

Belongs to the flavin monoamine oxidase family. Monomer. The cofactor is FAD.

It is found in the secreted. The protein localises to the extracellular space. The protein resides in the apoplast. Its subcellular location is the cell wall. It carries out the reaction spermidine + O2 + H2O = 4-aminobutanal + propane-1,3-diamine + H2O2. It catalyses the reaction N(8)-acetylspermidine + O2 + H2O = 4-acetamidobutanal + propane-1,3-diamine + H2O2. The enzyme catalyses spermine + O2 + H2O = N-(3-aminopropyl)-4-aminobutanal + propane-1,3-diamine + H2O2. The catalysed reaction is N(1)-acetylspermine + O2 + H2O = N-(3-acetamidopropyl)-4-aminobutanal + propane-1,3-diamine + H2O2. The protein operates within amine and polyamine degradation; spermine degradation. Functionally, flavoenzyme involved in polyamine back-conversion. Catalyzes the oxidation of the secondary amino group of polyamines, such as spermine, spermidine and their acetyl derivatives. Plays an important role in the regulation of polyamine intracellular concentration. This is Polyamine oxidase 1 from Zea mays (Maize).